Reading from the N-terminus, the 180-residue chain is MVSSMMVSSAATFTRASPAQSSMVAPFTGLKSASAFPVTRKPNADLSHLPSNGGRVQCMKVWPIEGVKKFETLSYLPTMKDEALVKQIEYLLRSKWIPCLEFCPKGFVWRENHRSPGYYDGRYWTMWKLPMFGCTDAVQVAKEVEECKKEYPHAFIRIIGFDNNRQVQCISFIAYKPTGY.

Residues 1–57 constitute a chloroplast transit peptide; it reads MVSSMMVSSAATFTRASPAQSSMVAPFTGLKSASAFPVTRKPNADLSHLPSNGGRVQ.

It belongs to the RuBisCO small chain family. In terms of assembly, heterohexadecamer of 8 large and 8 small subunits.

It is found in the plastid. It localises to the chloroplast. In terms of biological role, ruBisCO catalyzes two reactions: the carboxylation of D-ribulose 1,5-bisphosphate, the primary event in carbon dioxide fixation, as well as the oxidative fragmentation of the pentose substrate. Both reactions occur simultaneously and in competition at the same active site. Although the small subunit is not catalytic it is essential for maximal activity. The sequence is that of Ribulose bisphosphate carboxylase small subunit, chloroplastic from Musa acuminata (Banana).